The following is a 147-amino-acid chain: MEIFNVEELINMKPFKNMNKITINQKDNCILANRCFVKIDTPRYIPSTSISSSNIIRIRNHDFTLSELLYSPFHFQQPQFQYLLPGFVLTCIDKVSKQQKKCKYCISNRGDDDSLSINLFIPTINKSIYIIIGLRMKNFWKPKFEIE.

Belongs to the orthopoxvirus OPG058 family.

The chain is Protein OPG060 (OPG060) from Bos taurus (Bovine).